A 110-amino-acid polypeptide reads, in one-letter code: U1-lycotoxin-Ls1hh (110 aa).

Residues 1-20 form the signal peptide; the sequence is MKFVLLFGVLLVTLFSYSSA. A propeptide spanning residues 21 to 44 is cleaved from the precursor; that stretch reads EMLDDFDQADEDELLSLIEKEEAR. 4 cysteine pairs are disulfide-bonded: C47–C62, C54–C71, C61–C89, and C73–C87.

The protein belongs to the neurotoxin 19 (CSTX) family. 03 subfamily. Expressed by the venom gland.

It localises to the secreted. The sequence is that of U1-lycotoxin-Ls1hh from Lycosa singoriensis (Wolf spider).